Here is a 228-residue protein sequence, read N- to C-terminus: Sodium channel regulatory subunit beta-4 (228 aa).

A signal peptide spans 1-30 (MSRAGNRGNTQARWLGIGLLGLFLLPMYLS). One can recognise an Ig-like C2-type domain in the interval 31-148 (LEVSVGKATT…KDLNNSATIF (118 aa)). Topologically, residues 31 to 161 (LEVSVGKATT…VDKLEEVDNT (131 aa)) are extracellular. Residues Asn45, Asn71, Asn113, and Asn142 are each glycosylated (N-linked (GlcNAc...) asparagine). A disulfide bridge links Cys53 with Cys131. The chain crosses the membrane as a helical span at residues 162–182 (VTLIILAVVGGVIGLLVCILL). Residues 183–228 (LKKLITFILKKTREKKKECLVSSSGNDNTENGLPGSKAEEKPPTKV) are Cytoplasmic-facing. Residues 199–228 (KECLVSSSGNDNTENGLPGSKAEEKPPTKV) form a disordered region. The span at 203–213 (VSSSGNDNTEN) shows a compositional bias: polar residues. Residues 219–228 (KAEEKPPTKV) show a composition bias toward basic and acidic residues.

It belongs to the sodium channel auxiliary subunit SCN4B (TC 8.A.17) family. As to quaternary structure, a voltage-gated sodium (Nav) channel consists of an ion-conducting pore-forming alpha subunit functional on its own that is regulated by one or more beta subunits. The beta subunit SCN4B is disulfide-linked to the pore-forming alpha subunit. Interacts with SCN1A; regulatory subunit of SCN1A/Nav1.1. Interacts with SCN2A; regulatory subunit of SCN2A/Nav1.2. In terms of processing, contains an interchain disulfide bond with SCN2A. In terms of tissue distribution, expressed at a high level in dorsal root ganglia, at a lower level in brain, spinal cord, skeletal muscle and heart.

It is found in the cell membrane. In terms of biological role, regulatory subunit of multiple voltage-gated sodium (Nav) channels directly mediating the depolarization of excitable membranes. Navs, also called VGSCs (voltage-gated sodium channels) or VDSCs (voltage-dependent sodium channels), operate by switching between closed and open conformations depending on the voltage difference across the membrane. In the open conformation they allow Na(+) ions to selectively pass through the pore, along their electrochemical gradient. The influx of Na+ ions provokes membrane depolarization, initiating the propagation of electrical signals throughout cells and tissues. The accessory beta subunits participate in localization and functional modulation of the Nav channels. Modulates the activity of SCN1A/Nav1.1. Modulates the activity of SCN2A/Nav1.2. The polypeptide is Sodium channel regulatory subunit beta-4 (Rattus norvegicus (Rat)).